The sequence spans 52 residues: Protein PROPEP914 (52 aa).

The tract at residues 25–52 (DKPQDDMPQTPNSQVTIVSRDHPRGGNY) is disordered. Residues 31–41 (MPQTPNSQVTI) are compositionally biased toward polar residues. Basic and acidic residues predominate over residues 43–52 (SRDHPRGGNY).

Expressed in roots. Barely detected in flowers.

In terms of biological role, produces a rapid alkalinization of the cellular media and the induction of defense-related genes, including chitinase 1b, chalcone synthase and CYP93A1. Not active in tobacco or Arabidopsis. The receptor for GmPep914 is probably different from the receptor for GmSubPep. This Glycine max (Soybean) protein is Protein PROPEP914 (PROPEP914).